The following is a 225-amino-acid chain: MVTHSKFPAAGMSRPLDTSLRLKTFSSKSEYQLVVNAVRKLQESGFYWSAVTGGEANLLLSAEPAGTFLIRDSSDQRHFFTLSVKTQSGTKNLRIQCEGGSFSLQSDPRSTQPVPRFDCVLKLVHHYMPPPGAPSFPSPPTEPSSEVPEQPSAQPLPGSPPRRAYYIYSGGEKIPLVLSRPLSSNVATLQHLCRKTVNGHLDSYEKVTQLPGPIREFLDQYDAPL.

A kinase inhibitory region (KIR) region spans residues leucine 22 to leucine 33. An extended SH2 subdomain (ESS) region spans residues valine 34–glycine 45. Residues phenylalanine 46 to glutamate 142 enclose the SH2 domain. Positions proline 131 to glutamate 142 are enriched in pro residues. The segment at proline 131 to arginine 162 is disordered. Residues proline 143–proline 155 show a composition bias toward low complexity. One can recognise an SOCS box domain in the interval valine 177 to proline 224.

In terms of assembly, interacts with multiple activated proteins of the tyrosine kinase signaling pathway including IGF1 receptor, insulin receptor and JAK2. Binding to JAK2 is mediated through the KIR and SH2 domains to a phosphorylated tyrosine residue within the JAK2 JH1 domain. Binds specific activated tyrosine residues of the leptin, EPO, IL12, GSCF and gp130 receptors. Interaction with CSNK1E stabilizes SOCS3 protein. Component of the probable ECS(SOCS3) E3 ubiquitin-protein ligase complex which contains CUL5, RNF7/RBX2, Elongin BC complex and SOCS3. Interacts with CUL5, RNF7, ELOB and ELOC. Interacts with CUL2. Interacts with FGFR3. Interacts with INSR. Interacts with BCL10; this interaction may interfere with BCL10-binding with PELI2. Interacts with NOD2 (via CARD domain); the interaction promotes NOD2 degradation. In terms of processing, phosphorylated on tyrosine residues after stimulation by the cytokines, IL-2, EPO or IGF1. In terms of tissue distribution, widely expressed with high expression in heart, placenta, skeletal muscle, peripheral blood leukocytes, fetal and adult lung, and fetal liver and kidney. Lower levels in thymus.

It participates in protein modification; protein ubiquitination. In terms of biological role, SOCS family proteins form part of a classical negative feedback system that regulates cytokine signal transduction. SOCS3 is involved in negative regulation of cytokines that signal through the JAK/STAT pathway. Inhibits cytokine signal transduction by binding to tyrosine kinase receptors including IL6ST/gp130, LIF, erythropoietin, insulin, IL12, GCSF and leptin receptors. Binding to JAK2 inhibits its kinase activity and regulates IL6 signaling. Suppresses fetal liver erythropoiesis. Regulates onset and maintenance of allergic responses mediated by T-helper type 2 cells. Probable substrate recognition component of a SCF-like ECS (Elongin BC-CUL2/5-SOCS-box protein) E3 ubiquitin-protein ligase complex which mediates the ubiquitination and subsequent proteasomal degradation of target proteins. The protein is Suppressor of cytokine signaling 3 of Homo sapiens (Human).